The chain runs to 754 residues: 5-methyltetrahydropteroyltriglutamate--homocysteine methyltransferase (754 aa).

Residues 17–20 (RELK) and K110 each bind 5-methyltetrahydropteroyltri-L-glutamate. L-homocysteine-binding positions include 421–423 (IGS) and E474. Residues 421–423 (IGS) and E474 each bind L-methionine. 5-methyltetrahydropteroyltri-L-glutamate-binding positions include 505–506 (RC) and W551. D589 is a binding site for L-homocysteine. D589 provides a ligand contact to L-methionine. Residue E595 coordinates 5-methyltetrahydropteroyltri-L-glutamate. The Zn(2+) site is built by H631, C633, and E655. Catalysis depends on H684, which acts as the Proton donor. A Zn(2+)-binding site is contributed by C716.

This sequence belongs to the vitamin-B12 independent methionine synthase family. Zn(2+) is required as a cofactor.

It catalyses the reaction 5-methyltetrahydropteroyltri-L-glutamate + L-homocysteine = tetrahydropteroyltri-L-glutamate + L-methionine. The protein operates within amino-acid biosynthesis; L-methionine biosynthesis via de novo pathway; L-methionine from L-homocysteine (MetE route): step 1/1. Its function is as follows. Catalyzes the transfer of a methyl group from 5-methyltetrahydrofolate to homocysteine resulting in methionine formation. The sequence is that of 5-methyltetrahydropteroyltriglutamate--homocysteine methyltransferase from Synechococcus sp. (strain JA-2-3B'a(2-13)) (Cyanobacteria bacterium Yellowstone B-Prime).